A 1133-amino-acid polypeptide reads, in one-letter code: Nuclear pore complex-interacting protein family member B5 (1133 aa).

A helical membrane pass occupies residues 60–84 (WLHVIIAFPTSYKVVITLWIVYLWV). Disordered stretches follow at residues 241-262 (NRMGHQPPPPTQQHSITDNSLS), 290-575 (LTPL…IKTP), and 868-1133 (ERLR…RRLS). Positions 252–262 (QQHSITDNSLS) are enriched in polar residues. The segment covering 349 to 359 (PLPPSALPSAP) has biased composition (pro residues). Basic and acidic residues-rich tracts occupy residues 406–416 (DNIKTPAERLR), 448–458 (DNIKTPAERLR), 490–500 (DNIKTPAERLR), 528–538 (DNIKTPAERLR), 903–913 (DNIKTPAERLR), 945–955 (DNIKTPAERLR), and 987–997 (DNIKTPAERLR).

It belongs to the NPIP family.

It localises to the membrane. This chain is Nuclear pore complex-interacting protein family member B5 (NPIPB5), found in Homo sapiens (Human).